The following is a 240-amino-acid chain: Phosphoribosylaminoimidazole-succinocarboxamide synthase (240 aa).

This sequence belongs to the SAICAR synthetase family.

The enzyme catalyses 5-amino-1-(5-phospho-D-ribosyl)imidazole-4-carboxylate + L-aspartate + ATP = (2S)-2-[5-amino-1-(5-phospho-beta-D-ribosyl)imidazole-4-carboxamido]succinate + ADP + phosphate + 2 H(+). It participates in purine metabolism; IMP biosynthesis via de novo pathway; 5-amino-1-(5-phospho-D-ribosyl)imidazole-4-carboxamide from 5-amino-1-(5-phospho-D-ribosyl)imidazole-4-carboxylate: step 1/2. This Acidithiobacillus ferrooxidans (strain ATCC 23270 / DSM 14882 / CIP 104768 / NCIMB 8455) (Ferrobacillus ferrooxidans (strain ATCC 23270)) protein is Phosphoribosylaminoimidazole-succinocarboxamide synthase.